The chain runs to 395 residues: NAD(P)H-quinone oxidoreductase subunit H, chloroplastic (395 aa).

This sequence belongs to the complex I 49 kDa subunit family. NDH is composed of at least 16 different subunits, 5 of which are encoded in the nucleus.

The protein resides in the plastid. Its subcellular location is the chloroplast thylakoid membrane. The enzyme catalyses a plastoquinone + NADH + (n+1) H(+)(in) = a plastoquinol + NAD(+) + n H(+)(out). The catalysed reaction is a plastoquinone + NADPH + (n+1) H(+)(in) = a plastoquinol + NADP(+) + n H(+)(out). In terms of biological role, NDH shuttles electrons from NAD(P)H:plastoquinone, via FMN and iron-sulfur (Fe-S) centers, to quinones in the photosynthetic chain and possibly in a chloroplast respiratory chain. The immediate electron acceptor for the enzyme in this species is believed to be plastoquinone. Couples the redox reaction to proton translocation, and thus conserves the redox energy in a proton gradient. In Dioscorea elephantipes (Elephant's foot yam), this protein is NAD(P)H-quinone oxidoreductase subunit H, chloroplastic.